The sequence spans 895 residues: Protein translocase subunit SecA (895 aa).

ATP is bound by residues Q89, 107-111 (GEGKT), and D502. Disordered stretches follow at residues 560–579 (RRIDNQLRGRSGRQGDPGRT) and 848–884 (AAPAAEPVEAPKEGFVEDDPSTWGNPSRNDKCPCGSG). Zn(2+)-binding residues include C879, C881, C890, and H891.

Belongs to the SecA family. As to quaternary structure, monomer and homodimer. Part of the essential Sec protein translocation apparatus which comprises SecA, SecYEG and auxiliary proteins SecDF-YajC and YidC. Zn(2+) serves as cofactor.

It localises to the cell inner membrane. Its subcellular location is the cytoplasm. It carries out the reaction ATP + H2O + cellular proteinSide 1 = ADP + phosphate + cellular proteinSide 2.. In terms of biological role, part of the Sec protein translocase complex. Interacts with the SecYEG preprotein conducting channel. Has a central role in coupling the hydrolysis of ATP to the transfer of proteins into and across the cell membrane, serving both as a receptor for the preprotein-SecB complex and as an ATP-driven molecular motor driving the stepwise translocation of polypeptide chains across the membrane. The chain is Protein translocase subunit SecA from Ruegeria sp. (strain TM1040) (Silicibacter sp.).